The sequence spans 180 residues: Translation initiation factor IF-3 (180 aa).

Belongs to the IF-3 family. In terms of assembly, monomer.

Its subcellular location is the cytoplasm. Its function is as follows. IF-3 binds to the 30S ribosomal subunit and shifts the equilibrium between 70S ribosomes and their 50S and 30S subunits in favor of the free subunits, thus enhancing the availability of 30S subunits on which protein synthesis initiation begins. The polypeptide is Translation initiation factor IF-3 (Salmonella paratyphi A (strain ATCC 9150 / SARB42)).